The sequence spans 226 residues: Glutathione peroxidase 3 (226 aa).

The N-terminal stretch at 1–24 is a signal peptide; it reads MARILRASCLLSLLLAGFVPPGRG. Sec-73 is a catalytic residue. Sec-73 is a non-standard amino acid (selenocysteine).

The protein belongs to the glutathione peroxidase family. Homotetramer. In terms of tissue distribution, secreted in plasma.

It is found in the secreted. It carries out the reaction 2 glutathione + H2O2 = glutathione disulfide + 2 H2O. It catalyses the reaction tert-butyl hydroperoxide + 2 glutathione = tert-butanol + glutathione disulfide + H2O. Protects cells and enzymes from oxidative damage, by catalyzing the reduction of hydrogen peroxide, lipid peroxides and organic hydroperoxide, by glutathione. This is Glutathione peroxidase 3 from Rattus norvegicus (Rat).